The sequence spans 492 residues: Polyamine oxidase 5 (492 aa).

4 residues coordinate FAD: Glu55, Arg63, Val244, and Glu431. Residues 490-492 (SRL) carry the Microbody targeting signal motif.

This sequence belongs to the flavin monoamine oxidase family. The cofactor is FAD. In terms of tissue distribution, widely expressed.

The protein resides in the peroxisome. It catalyses the reaction spermine + O2 + H2O = 3-aminopropanal + spermidine + H2O2. It carries out the reaction norspermine + O2 + H2O = norspermidine + 3-aminopropanal + H2O2. The enzyme catalyses thermospermine + O2 + H2O = 3-aminopropanal + spermidine + H2O2. The protein operates within amine and polyamine degradation; spermine degradation. Its function is as follows. Flavoenzyme involved in polyamine back-conversion. Catalyzes the oxidation of the secondary amino group of polyamines, such as spermine. Substrate preference is spermine &gt; thermospermine &gt; norspermine. No activity detected when putrescine, spermidine or N(1)-acetylspermidine are used as substrates. Plays an important role in the regulation of polyamine intracellular concentration. May play a role in producing hydrogen peroxide during seed germination. The chain is Polyamine oxidase 5 from Oryza sativa subsp. japonica (Rice).